Reading from the N-terminus, the 598-residue chain is Elongation factor 4 2 (598 aa).

In terms of domain architecture, tr-type G spans 2–184; the sequence is KHIRNFCIIA…GIVKNLPAPK (183 aa). Residues 14 to 19 and 131 to 134 each bind GTP; these read DHGKST and NKID.

Belongs to the TRAFAC class translation factor GTPase superfamily. Classic translation factor GTPase family. LepA subfamily.

The protein localises to the cell inner membrane. The enzyme catalyses GTP + H2O = GDP + phosphate + H(+). In terms of biological role, required for accurate and efficient protein synthesis under certain stress conditions. May act as a fidelity factor of the translation reaction, by catalyzing a one-codon backward translocation of tRNAs on improperly translocated ribosomes. Back-translocation proceeds from a post-translocation (POST) complex to a pre-translocation (PRE) complex, thus giving elongation factor G a second chance to translocate the tRNAs correctly. Binds to ribosomes in a GTP-dependent manner. The chain is Elongation factor 4 2 from Rhodopirellula baltica (strain DSM 10527 / NCIMB 13988 / SH1).